The following is a 206-amino-acid chain: Holliday junction branch migration complex subunit RuvA (206 aa).

The domain I stretch occupies residues 1–64 (MIGKLKGTLD…EDMLRLYGFQ (64 aa)). The tract at residues 65-144 (SALEREWFRL…AYAGAASGTI (80 aa)) is domain II. Residues 145–154 (GLKQELGEGV) are flexible linker. The tract at residues 154–206 (VAPAPITDAVSALVNLGYSRDTAANAVAAALKTAGEDADASKLIRFGLKELAR) is domain III.

Belongs to the RuvA family. In terms of assembly, homotetramer. Forms an RuvA(8)-RuvB(12)-Holliday junction (HJ) complex. HJ DNA is sandwiched between 2 RuvA tetramers; dsDNA enters through RuvA and exits via RuvB. An RuvB hexamer assembles on each DNA strand where it exits the tetramer. Each RuvB hexamer is contacted by two RuvA subunits (via domain III) on 2 adjacent RuvB subunits; this complex drives branch migration. In the full resolvosome a probable DNA-RuvA(4)-RuvB(12)-RuvC(2) complex forms which resolves the HJ.

It localises to the cytoplasm. The RuvA-RuvB-RuvC complex processes Holliday junction (HJ) DNA during genetic recombination and DNA repair, while the RuvA-RuvB complex plays an important role in the rescue of blocked DNA replication forks via replication fork reversal (RFR). RuvA specifically binds to HJ cruciform DNA, conferring on it an open structure. The RuvB hexamer acts as an ATP-dependent pump, pulling dsDNA into and through the RuvAB complex. HJ branch migration allows RuvC to scan DNA until it finds its consensus sequence, where it cleaves and resolves the cruciform DNA. This is Holliday junction branch migration complex subunit RuvA from Mesorhizobium japonicum (strain LMG 29417 / CECT 9101 / MAFF 303099) (Mesorhizobium loti (strain MAFF 303099)).